Here is a 404-residue protein sequence, read N- to C-terminus: Na(+)/H(+) antiporter NhaA 2 (404 aa).

The next 11 membrane-spanning stretches (helical) occupy residues 24 to 44, 67 to 87, 103 to 123, 132 to 152, 161 to 181, 184 to 204, 216 to 236, 266 to 286, 303 to 323, 339 to 359, and 372 to 392; these read GIILLICAIAAIMIANSSFSG, VLHWINDGLMAIFFLVVGMEI, ILPISAAIGGMIVPAIIYALF, GWGIPMATDIAFALGMLSLVA, VFLTALAIVDDLGAIIVIAIF, SQISWIALLLGLIVFATLILA, IILGIILWICLLKSGIHATIA, TPWSSFVIMPIFAFANAGIII, IIFGLFVGKQIGIFGTSFILI, LYGASVFGGIGFTMSIFVSSL, and MCIMIASILAATYGTIVFKFI.

This sequence belongs to the NhaA Na(+)/H(+) (TC 2.A.33) antiporter family.

The protein resides in the cell membrane. The enzyme catalyses Na(+)(in) + 2 H(+)(out) = Na(+)(out) + 2 H(+)(in). Na(+)/H(+) antiporter that extrudes sodium in exchange for external protons. This chain is Na(+)/H(+) antiporter NhaA 2, found in Clostridium beijerinckii (strain ATCC 51743 / NCIMB 8052) (Clostridium acetobutylicum).